A 3411-amino-acid polypeptide reads, in one-letter code: Genome polyprotein (3411 aa).

The Cytoplasmic segment spans residues 1–104 (MSGRKAQGKT…LSSRKRRSHD (104 aa)). The hydrophobic; homodimerization of capsid protein C stretch occupies residues 38 to 72 (PGPSRGVQGFIFFFLFNILTGKKITAHLKRLWKML). Residues 102–121 (SHDVLTVQFLILGMLLMTGG) constitute a propeptide, ER anchor for the capsid protein C, removed in mature form by serine protease NS3. A helical membrane pass occupies residues 105 to 125 (VLTVQFLILGMLLMTGGVTLV). Over 126–244 (RKNRWLLLNV…GERQLQKIER (119 aa)) the chain is Extracellular. 2 N-linked (GlcNAc...) asparagine; by host glycosylation sites follow: Asn134 and Asn150. Residues 245 to 265 (WFVRNPFFAVTALTIAYLVGS) form a helical membrane-spanning segment. The Cytoplasmic portion of the chain corresponds to 266 to 270 (NMTQR). The chain crosses the membrane as a helical span at residues 271–285 (VVIALLVLAVGPAYS). The Extracellular portion of the chain corresponds to 286-730 (AHCIGITDRD…TVFGSAFQGL (445 aa)). 8 disulfides stabilise this stretch: Cys288–Cys315, Cys345–Cys401, Cys345–Cys406, Cys359–Cys390, Cys377–Cys401, Cys377–Cys406, Cys467–Cys568, and Cys585–Cys615. Positions 383–396 (DRGWGNGCGLFGKG) are fusion peptide. The chain crosses the membrane as a helical span at residues 731 to 751 (FGGLNWITKVIMGAVLIWVGI). Over 752–757 (NTRNMT) the chain is Extracellular. A helical membrane pass occupies residues 758–778 (MSMSMILVGVIMMFLSLGVGA). The Extracellular portion of the chain corresponds to 779-1132 (DQGCAINFGK…LVRSWVTAGE (354 aa)). 6 disulfide bridges follow: Cys782–Cys793, Cys833–Cys921, Cys957–Cys1002, Cys1058–Cys1107, Cys1069–Cys1091, and Cys1090–Cys1094. 2 N-linked (GlcNAc...) asparagine; by host glycosylation sites follow: Asn908 and Asn986. Residues 1133 to 1153 (IHAVPFGLVSMMIAMEVVLRK) form a helical membrane-spanning segment. Residues 1154-1201 (RQGPKQMLVGGVVLLGAMLVGQVTLLDLLKLTVAVGLHFHEMNNGGDA) are Cytoplasmic-facing. The chain crosses the membrane as a helical span at residues 1202-1222 (MYMALIAAFSIRPGLLIGFGL). At 1223 to 1287 (RTLWSPRERL…ILPLMALLTP (65 aa)) the chain is on the lumenal side. A helical membrane pass occupies residues 1288–1308 (VTMAEVRLAAMFFCAVVIIGV). At 1309–1355 (LHQNFKDTSMQKTIPLVALTLTSYLGLTQPFLGLCAFLATRIFGRRS) the chain is on the cytoplasmic side. The chain crosses the membrane as a helical span at residues 1356–1376 (IPVNEALAAAGLVGVLAGLAF). Residues 1377 to 1378 (QE) lie on the Lumenal side of the membrane. The helical transmembrane segment at 1379–1399 (MENFLGPIAVGGLLMMLVSVA) threads the bilayer. Residues 1400 to 1456 (GRVDGLELKKLGEVSWEEEAEISGSSARYDVALSEQGEFKLLSEEKVPWDQVVMTSL) are Cytoplasmic-facing. The tract at residues 1407–1446 (LKKLGEVSWEEEAEISGSSARYDVALSEQGEFKLLSEEKV) is interacts with and activates NS3 protease. An intramembrane region (helical) is located at residues 1457-1477 (ALVGAALHPFALLLVLAGWLF). Over 1478 to 2157 (HVRGARRSGD…RNALSMMPEA (680 aa)) the chain is Cytoplasmic. Positions 1485-1665 (SGDVLWDIPT…EVKEEGKEEL (181 aa)) constitute a Peptidase S7 domain. Catalysis depends on charge relay system; for serine protease NS3 activity residues His1537, Asp1561, and Ser1622. In terms of domain architecture, Helicase ATP-binding spans 1669–1825 (PTMLKKGMTT…HSNGEIEDVQ (157 aa)). The important for RNA-binding stretch occupies residues 1673 to 1676 (KKGM). 1682-1689 (FHPGAGKT) is a binding site for ATP. The DEAH box motif lies at 1773–1776 (DEAH). The 178-residue stretch at 1820–1997 (EIEDVQTDIP…VRGGMVAPLY (178 aa)) folds into the Helicase C-terminal domain. Lys1877 is modified (N6-acetyllysine; by host). Residues 2158–2178 (MTIVMLFILAGLLTSGMVIFF) form a helical membrane-spanning segment. Topologically, residues 2179–2186 (MSPKGISR) are lumenal. Positions 2187–2207 (MSMAMGTMAGCGYLMFLGGVK) form an intramembrane region, helical. Topologically, residues 2208–2209 (PT) are lumenal. The helical transmembrane segment at 2210–2230 (HISYVMLIFFVLMVVVIPEPG) threads the bilayer. Topologically, residues 2231–2241 (QQRSIQDNQVA) are cytoplasmic. The chain crosses the membrane as a helical span at residues 2242-2262 (YLIIGILTLVSAVAANELGML). The Lumenal portion of the chain corresponds to 2263–2293 (EKTKEDLFGKKNLIPSSASPWSWPDLDLKPG). The segment at residues 2294 to 2314 (AAWTVYVGIVTMLSPMLHHWI) is an intramembrane region (helical). At 2315-2360 (KVEYGNLSLSGIAQSASVLSFMDKGIPFMKMNISVIMLLVSGWNSI) the chain is on the lumenal side. The chain crosses the membrane as a helical span at residues 2361 to 2381 (TVMPLLCGIGCAMLHWSLILP). Topologically, residues 2382-2421 (GIKAQQSKLAQRRVFHGVAENPVVDGNPTVDIEEAPEMPA) are cytoplasmic. A helical membrane pass occupies residues 2422–2442 (LYEKKLALYLLLALSLASVAM). The Lumenal segment spans residues 2443 to 2445 (CRT). The chain crosses the membrane as a helical span at residues 2446–2466 (PFSLAEGIVLASAALGPLIEG). Residues 2467–3411 (NTSLLWNGPM…DADLQLGELI (945 aa)) lie on the Cytoplasmic side of the membrane. Positions 2507–2771 (GSANGKTLGE…DVILPIGTRS (265 aa)) constitute an mRNA cap 0-1 NS5-type MT domain. Ser2562 serves as a coordination point for S-adenosyl-L-methionine. Ser2562 is subject to Phosphoserine. Lys2567 serves as the catalytic For 2'-O-MTase activity. The S-adenosyl-L-methionine site is built by Gly2592, Trp2593, Thr2610, Leu2611, Asp2637, and Ile2638. The For 2'-O-MTase activity role is filled by Asp2652. Ile2653 contributes to the S-adenosyl-L-methionine binding site. Residues Lys2688 and Glu2724 each act as for 2'-O-MTase activity in the active site. Tyr2726 contributes to the S-adenosyl-L-methionine binding site. A Nuclear localization signal motif is present at residues 2878–2911 (RKIMKVVNRWLFRHLAREKNPRLCTKEEFIAKVR). The Zn(2+) site is built by Glu2945, His2949, Cys2954, and Cys2957. The region spanning 3035 to 3187 (GGFYADDTAG…RPIDDRFGLA (153 aa)) is the RdRp catalytic domain. Zn(2+)-binding residues include His3222, Cys3238, and Cys3357.

The protein in the N-terminal section; belongs to the class I-like SAM-binding methyltransferase superfamily. mRNA cap 0-1 NS5-type methyltransferase family. As to quaternary structure, homodimer. Interacts (via N-terminus) with host EXOC1 (via C-terminus); this interaction results in EXOC1 degradation through the proteasome degradation pathway. Forms heterodimers with envelope protein E in the endoplasmic reticulum and Golgi. In terms of assembly, homodimer; in the endoplasmic reticulum and Golgi. Interacts with protein prM. Interacts with non-structural protein 1. As to quaternary structure, homodimer; Homohexamer when secreted. Interacts with envelope protein E. Interacts (via N-terminus) with serine protease NS3. In terms of assembly, forms a heterodimer with serine protease NS3. May form homooligomers. As to quaternary structure, forms a heterodimer with NS2B. Interacts with non-structural protein 2A (via N-terminus). Interacts with NS4B. Interacts with unphosphorylated RNA-directed RNA polymerase NS5; this interaction stimulates RNA-directed RNA polymerase NS5 guanylyltransferase activity. NS3 interacts with host PDCD6IP; this interaction contributes to virion release. Interacts with serine protease NS3. In terms of assembly, homodimer. Interacts with host STAT2; this interaction prevents the establishment of cellular antiviral state. Interacts with serine protease NS3. Interacts with host TRIM23; this interaction leads to NS5 ubiquitination. In terms of processing, specific enzymatic cleavages in vivo yield mature proteins. The nascent capsid protein C contains a C-terminal hydrophobic domain that act as a signal sequence for translocation of prM into the lumen of the ER. Mature capsid protein C is cleaved at a site upstream of this hydrophobic domain by NS3. prM is cleaved in post-Golgi vesicles by a host furin, releasing the mature small envelope protein M, and peptide pr. Non-structural protein 2A-alpha, a C-terminally truncated form of non-structural protein 2A, results from partial cleavage by NS3. Specific enzymatic cleavages in vivo yield mature proteins peptide 2K acts as a signal sequence and is removed from the N-terminus of NS4B by the host signal peptidase in the ER lumen. Signal cleavage at the 2K-4B site requires a prior NS3 protease-mediated cleavage at the 4A-2K site. Cleaved in post-Golgi vesicles by a host furin, releasing the mature small envelope protein M, and peptide pr. This cleavage is incomplete as up to 30% of viral particles still carry uncleaved prM. Post-translationally, N-glycosylated. In terms of processing, N-glycosylated. The excreted form is glycosylated and this is required for efficient secretion of the protein from infected cells. Polyubiquitinated; ubiquitination is probably mediated by host TRIM23 and is prerequisite for NS5-STAT2 interaction. NS5 is not ISGylated or sumoylated. Post-translationally, acetylated by host KAT5. Acetylation modulates NS3 RNA-binding and unwinding activities and plays an important positive role for viral replication. In terms of processing, phosphorylated on serines residues. This phosphorylation may trigger NS5 nuclear localization.

It localises to the virion. The protein resides in the host nucleus. The protein localises to the host cytoplasm. It is found in the host perinuclear region. Its subcellular location is the secreted. It localises to the virion membrane. The protein resides in the host endoplasmic reticulum membrane. The enzyme catalyses Selective hydrolysis of -Xaa-Xaa-|-Yaa- bonds in which each of the Xaa can be either Arg or Lys and Yaa can be either Ser or Ala.. It catalyses the reaction RNA(n) + a ribonucleoside 5'-triphosphate = RNA(n+1) + diphosphate. The catalysed reaction is a ribonucleoside 5'-triphosphate + H2O = a ribonucleoside 5'-diphosphate + phosphate + H(+). It carries out the reaction ATP + H2O = ADP + phosphate + H(+). The enzyme catalyses a 5'-end (5'-triphosphoguanosine)-ribonucleoside in mRNA + S-adenosyl-L-methionine = a 5'-end (N(7)-methyl 5'-triphosphoguanosine)-ribonucleoside in mRNA + S-adenosyl-L-homocysteine. It catalyses the reaction a 5'-end (N(7)-methyl 5'-triphosphoguanosine)-ribonucleoside in mRNA + S-adenosyl-L-methionine = a 5'-end (N(7)-methyl 5'-triphosphoguanosine)-(2'-O-methyl-ribonucleoside) in mRNA + S-adenosyl-L-homocysteine + H(+). Functionally, plays a role in virus budding by binding to the cell membrane and gathering the viral RNA into a nucleocapsid that forms the core of a mature virus particle. During virus entry, may induce genome penetration into the host cytoplasm after hemifusion induced by the surface proteins. Can migrate to the cell nucleus where it modulates host functions. In terms of biological role, inhibits RNA silencing by interfering with host Dicer. Its function is as follows. Prevents premature fusion activity of envelope proteins in trans-Golgi by binding to envelope protein E at pH6.0. After virion release in extracellular space, gets dissociated from E dimers. Acts as a chaperone for envelope protein E during intracellular virion assembly by masking and inactivating envelope protein E fusion peptide. prM is the only viral peptide matured by host furin in the trans-Golgi network probably to avoid catastrophic activation of the viral fusion activity in acidic Golgi compartment prior to virion release. prM-E cleavage is inefficient, and many virions are only partially matured. These uncleaved prM would play a role in immune evasion. Functionally, may play a role in virus budding. Exerts cytotoxic effects by activating a mitochondrial apoptotic pathway through M ectodomain. May display a viroporin activity. In terms of biological role, binds to host cell surface receptor and mediates fusion between viral and cellular membranes. Envelope protein is synthesized in the endoplasmic reticulum in the form of heterodimer with protein prM. They play a role in virion budding in the ER, and the newly formed immature particle is covered with 60 spikes composed of heterodimer between precursor prM and envelope protein E. The virion is transported to the Golgi apparatus where the low pH causes dissociation of PrM-E heterodimers and formation of E homodimers. prM-E cleavage is inefficient, and many virions are only partially matured. These uncleaved prM would play a role in immune evasion. Its function is as follows. Involved in immune evasion, pathogenesis and viral replication. Once cleaved off the polyprotein, is targeted to three destinations: the viral replication cycle, the plasma membrane and the extracellular compartment. Essential for viral replication. Required for formation of the replication complex and recruitment of other non-structural proteins to the ER-derived membrane structures. Excreted as a hexameric lipoparticle that plays a role against host immune response. Antagonizing the complement function. Binds to the host macrophages and dendritic cells. Inhibits signal transduction originating from Toll-like receptor 3 (TLR3). Component of the viral RNA replication complex that functions in virion assembly and antagonizes the host immune response. Functionally, required cofactor for the serine protease function of NS3. May have membrane-destabilizing activity and form viroporins. In terms of biological role, displays three enzymatic activities: serine protease, NTPase and RNA helicase. NS3 serine protease, in association with NS2B, performs its autocleavage and cleaves the polyprotein at dibasic sites in the cytoplasm: C-prM, NS2A-NS2B, NS2B-NS3, NS3-NS4A, NS4A-2K and NS4B-NS5. NS3 RNA helicase binds RNA and unwinds dsRNA in the 3' to 5' direction. Also plays a role in virus assembly. Its function is as follows. Regulates the ATPase activity of the NS3 helicase activity. NS4A allows NS3 helicase to conserve energy during unwinding. Functions as a signal peptide for NS4B and is required for the interferon antagonism activity of the latter. Functionally, induces the formation of ER-derived membrane vesicles where the viral replication takes place. Inhibits interferon (IFN)-induced host STAT1 phosphorylation and nuclear translocation, thereby preventing the establishment of cellular antiviral state by blocking the IFN-alpha/beta pathway. In terms of biological role, replicates the viral (+) and (-) RNA genome, and performs the capping of genomes in the cytoplasm. NS5 methylates viral RNA cap at guanine N-7 and ribose 2'-O positions. Besides its role in RNA genome replication, also prevents the establishment of cellular antiviral state by blocking the interferon-alpha/beta (IFN-alpha/beta) signaling pathway. IFN-I induces binding of NS5 to host IFN-activated transcription factor STAT2, preventing its transcriptional activity. Host TRIM23 is the E3 ligase that interacts with and polyubiquitinates NS5 to promote its binding to STAT2 and trigger IFN-I signaling inhibition. The polypeptide is Genome polyprotein (Aedes aegypti (Yellowfever mosquito)).